Reading from the N-terminus, the 325-residue chain is Malate dehydrogenase (325 aa).

11–17 is a binding site for NAD(+); it reads GAAGHVS. Residues arginine 92 and arginine 98 each contribute to the substrate site. NAD(+) contacts are provided by residues asparagine 105, glutamine 112, and 129–131; that span reads VGN. Residues asparagine 131 and arginine 162 each contribute to the substrate site. The active-site Proton acceptor is the histidine 187.

The protein belongs to the LDH/MDH superfamily. MDH type 2 family.

It catalyses the reaction (S)-malate + NAD(+) = oxaloacetate + NADH + H(+). Its function is as follows. Catalyzes the reversible oxidation of malate to oxaloacetate. This Desulfotalea psychrophila (strain LSv54 / DSM 12343) protein is Malate dehydrogenase.